A 605-amino-acid chain; its full sequence is UPF0313 protein GSU2873 (605 aa).

Positions 291 to 561 constitute a Radical SAM core domain; that stretch reads AYEQIRASVT…LQKALLLWHL (271 aa). [4Fe-4S] cluster contacts are provided by C305, C309, and C312. The segment at 586–605 is disordered; sequence GGAAGGGGGRSGSGFRPGRT. The segment covering 587–597 has biased composition (gly residues); that stretch reads GAAGGGGGRSG.

It belongs to the UPF0313 family. The cofactor is [4Fe-4S] cluster.

The sequence is that of UPF0313 protein GSU2873 from Geobacter sulfurreducens (strain ATCC 51573 / DSM 12127 / PCA).